Here is a 60-residue protein sequence, read N- to C-terminus: UPF0337 protein SSP1134 (60 aa).

The interval 1–41 is disordered; that stretch reads MADENKFEQAKGNVKETVGNVTDNKELENEGKEDKTSGKAK. Positions 23–41 are enriched in basic and acidic residues; it reads DNKELENEGKEDKTSGKAK.

The protein belongs to the UPF0337 (CsbD) family.

The chain is UPF0337 protein SSP1134 from Staphylococcus saprophyticus subsp. saprophyticus (strain ATCC 15305 / DSM 20229 / NCIMB 8711 / NCTC 7292 / S-41).